Here is a 969-residue protein sequence, read N- to C-terminus: MIFRKSISKSPSSKGSTVCFRCGQAFQRRETPISFGGHMWHKDCFCCTKCDKGLEHSDQMLVQTSDGRPVCSSCAHTCTACRMRIKDYALMSGYDSYHRECFRCHDCRKQIIDSNFKRDNRTIFCNDCKQVRHPSRSSDESADYHNFEVDVTIKPTETKSSVESNKSLSIEIMSPQKPPLSPFGGSRDRLVSETPTNMSQAEGGNVPNDGQDSNLASNSADSLLPSAKNRSFSSFTSFESPMKYDDSFFPISPSISPLQKVNKQQQIESPTATFPLSKNTWKNRFHTFHKQSFTPVNDSSSSDSLKPTINEEALDDFAGSASPYKTMSLTDRAEPIVMNGHMRSLHNATSPFRPFSPSYRSSDTHSPRTRSPNVQTHKKTSSQPSDLSSFAQLLSPPQVLSPKPNGGGHKSFRHSHSLSETSQQTLVPSLGSNGEYHLPTNDHSSTPAQSERDSDVEELREQLENLTALTKKLSERLSSSTFDNSKFIRTEDKDTVRSAKLEICEKFFSFADVTDDPTLKDPKHQDLVAAANAYMAMLRESYGTEINNLLERRNELLDDYNNVQKILNESLEASVHLNTKNLELADLNNNLVKQIQHRVPPENQSNLEHTITTSSKNTTSSINPLTAVSSNSGQSSGRPGPLSPNLNVTTRIDIKGKKGSMHLQPRDVNRKVPFKSMHTKSKSADPVVGNEDRTQCDHVFHVNAIFKPSRCYICSESVWGSELRCFHCSISCHSRCLKRLFAESEHEKTMSETVSENSKWMPEMPTRMPPPGPSPTMFGRSLENQLKIEGSVLPQVIAMCVSCVDAHGLEVEGIYRISGSASQVRVLVDEFENGSIRMEHLTSDLFACTSVLKTYLHRLPEPVIPGTQYEELLEAEKIEKEEEKIERVVEVMKTLHPAHLSVFRFLIAHLGRVCKHAEKNLMNSKNVSTVFAPTLMRDKVNRFDLQHATKKSTALQFMLDNVDKILHNL.

2 LIM zinc-binding domains span residues 17 to 81 and 76 to 135; these read TVCF…CTAC and HTCT…RHPS. Disordered stretches follow at residues 170–223, 348–459, and 613–646; these read IEIM…ADSL, ATSP…VEEL, and TSSK…SPNL. The segment covering 193–202 has biased composition (polar residues); it reads ETPTNMSQAE. Low complexity-rich tracts occupy residues 212–223 and 350–361; these read DSNLASNSADSL and SPFRPFSPSYRS. Composition is skewed to polar residues over residues 369 to 392 and 418 to 432; these read TRSP…SFAQ and LSET…SLGS. Residues 450–459 show a composition bias toward basic and acidic residues; it reads SERDSDVEEL. Positions 613 to 623 are enriched in low complexity; it reads TSSKNTTSSIN. Residues 624–637 are compositionally biased toward polar residues; sequence PLTAVSSNSGQSSG. The Phorbol-ester/DAG-type zinc-finger motif lies at 697 to 744; sequence DHVFHVNAIFKPSRCYICSESVWGSELRCFHCSISCHSRCLKRLFAES. The Rho-GAP domain maps to 780-966; sequence RSLENQLKIE…FMLDNVDKIL (187 aa).

Interacts with dil1.

The protein localises to the cell tip. GTPase-activating protein for Rho-type proteins. This Schizosaccharomyces pombe (strain 972 / ATCC 24843) (Fission yeast) protein is Probable Rho-type GTPase-activating protein 3 (rga3).